The chain runs to 1269 residues: Protein strawberry notch homolog 1 (1269 aa).

Positions 21–47 are disordered; sequence NDLFDVDGGDAGLATPTPPSVQQQQPP. K113 carries the post-translational modification N6-acetyllysine. S126 and S178 each carry phosphoserine. K377 is subject to N6-acetyllysine. Residues 652 to 725 are disordered; it reads PSNNSSPRDS…SLITSQDAVE (74 aa). A phosphoserine mark is found at S656, S657, and S661. The segment covering 679–693 has biased composition (acidic residues); the sequence is SGSESDVSDNEESDY. Phosphoserine is present on residues S700 and S701. A coiled-coil region spans residues 719–746; it reads TSQDAVERAQQMKKDLLDKLEKLAEDLP. The residue at position 1098 (K1098) is an N6-acetyllysine. S1262 bears the Phosphoserine mark.

This sequence belongs to the SBNO family.

The protein resides in the nucleus. Functionally, plays a crucial role in the regulation of neural stem cells (NSCs) proliferation. Enhances the phosphorylation of GSK3B through the PI3K-Akt signaling pathway, thereby upregulating the Wnt/beta-catenin signaling pathway and promoting the proliferation of NSCs. Improves ischemic stroke recovery while inhibiting neuroinflammation through small extracellular vesicles (sEVs)-mediated mechanism. Enhances the secretion of sEVs from NSCs, which in turn inhibit both the MAPK and NF-kappaB pathways in microglia. This inhibition suppresses the pro-inflammatory M1 polarization of microglia, promoting a shift towards the M2 anti-inflammatory phenotype, which is beneficial for reducing neuroinflammation. The chain is Protein strawberry notch homolog 1 (Sbno1) from Rattus norvegicus (Rat).